Reading from the N-terminus, the 544-residue chain is Chaperonin GroEL (544 aa).

Residues threonine 29–proline 32, lysine 50, aspartate 86–threonine 90, glycine 414, and aspartate 494 contribute to the ATP site.

Belongs to the chaperonin (HSP60) family. As to quaternary structure, forms a cylinder of 14 subunits composed of two heptameric rings stacked back-to-back. Interacts with the co-chaperonin GroES.

The protein localises to the cytoplasm. It carries out the reaction ATP + H2O + a folded polypeptide = ADP + phosphate + an unfolded polypeptide.. Together with its co-chaperonin GroES, plays an essential role in assisting protein folding. The GroEL-GroES system forms a nano-cage that allows encapsulation of the non-native substrate proteins and provides a physical environment optimized to promote and accelerate protein folding. The protein is Chaperonin GroEL of Amoebophilus asiaticus (strain 5a2).